The sequence spans 79 residues: UPF0349 protein GTNG_2908 (79 aa).

Belongs to the UPF0349 family.

The polypeptide is UPF0349 protein GTNG_2908 (Geobacillus thermodenitrificans (strain NG80-2)).